The sequence spans 397 residues: Lysophospholipid transporter LplT (397 aa).

Residues 1–17 (MSESVHTNTSLWSKGMK) lie on the Periplasmic side of the membrane. Residues 18–38 (AVIVAQFLSAFGDNALLFATL) form a helical membrane-spanning segment. Over 39 to 52 (ALLKAQFYPEWSQP) the chain is Cytoplasmic. Residues 53-73 (ILQMVFVGAYILFAPFVGQVA) form a helical membrane-spanning segment. Residues 74 to 90 (DSFAKGRVMMFANGLKL) are Periplasmic-facing. Residues 91-111 (LGAASICFGINPFLGYTLVGV) form a helical membrane-spanning segment. Residues 112 to 144 (GAAAYSPAKYGILGELTTGSKLVKANGLMEAST) lie on the Cytoplasmic side of the membrane. The helical transmembrane segment at 145-165 (IAAILLGSVAGGVLADWHVLV) threads the bilayer. Residue alanine 166 is a topological domain, periplasmic. A helical transmembrane segment spans residues 167 to 187 (LAACALAYGGAVVANIYIPKL). Topologically, residues 188-226 (AAARPGQSWNLINMTRSFLNACTSLWRNGETRFSLVGTS) are cytoplasmic. A helical transmembrane segment spans residues 227 to 247 (LFWGAGVTLRFLLVLWVPVAL). At 248 to 256 (GITDNATPT) the chain is on the periplasmic side. The helical transmembrane segment at 257–277 (YLNAMVAIGIVVGAGAAAKLV) threads the bilayer. Residues 278–280 (TLE) lie on the Cytoplasmic side of the membrane. A helical membrane pass occupies residues 281–301 (TMSRCMPAGILIGVVVLIFSL). The Periplasmic portion of the chain corresponds to 302 to 304 (QHE). A helical transmembrane segment spans residues 305–325 (LLPAYALLMLIGVMGGFFVVP). The Cytoplasmic portion of the chain corresponds to 326-343 (LNALLQERGKKSVGAGNA). The chain crosses the membrane as a helical span at residues 344–364 (IAVQNLGENSAMLLMLGIYSL). At 365 to 366 (AV) the chain is on the periplasmic side. Residues 367–387 (MVGIPVVPIGIGFGALFALAI) form a helical membrane-spanning segment. Over 388-397 (TALWIWQRRH) the chain is Cytoplasmic.

The protein belongs to the major facilitator superfamily. LplT (TC 2.A.1.42) family.

The protein localises to the cell inner membrane. In terms of biological role, catalyzes the facilitated diffusion of 2-acyl-glycero-3-phosphoethanolamine (2-acyl-GPE) into the cell. The polypeptide is Lysophospholipid transporter LplT (Shigella sonnei (strain Ss046)).